Here is a 114-residue protein sequence, read N- to C-terminus: FK506-binding protein 1 (114 aa).

One can recognise a PPIase FKBP-type domain in the interval 26–114 (GDLVTIHYTG…VFDVELLKIN (89 aa)).

Belongs to the FKBP-type PPIase family. FKBP1 subfamily.

Its subcellular location is the cytoplasm. It catalyses the reaction [protein]-peptidylproline (omega=180) = [protein]-peptidylproline (omega=0). Inhibited by both FK506 and rapamycin. In terms of biological role, PPIases accelerate the folding of proteins. It catalyzes the cis-trans isomerization of proline imidic peptide bonds in oligopeptides. This is FK506-binding protein 1 (FPR1) from Kluyveromyces lactis (strain ATCC 8585 / CBS 2359 / DSM 70799 / NBRC 1267 / NRRL Y-1140 / WM37) (Yeast).